A 319-amino-acid polypeptide reads, in one-letter code: Ribosomal RNA small subunit methyltransferase H (319 aa).

Residues 35 to 37 (AGH), Asp55, Phe84, Asp104, and Gln111 contribute to the S-adenosyl-L-methionine site.

The protein belongs to the methyltransferase superfamily. RsmH family.

The protein resides in the cytoplasm. It carries out the reaction cytidine(1402) in 16S rRNA + S-adenosyl-L-methionine = N(4)-methylcytidine(1402) in 16S rRNA + S-adenosyl-L-homocysteine + H(+). Specifically methylates the N4 position of cytidine in position 1402 (C1402) of 16S rRNA. The sequence is that of Ribosomal RNA small subunit methyltransferase H from Enterococcus hirae.